A 175-amino-acid polypeptide reads, in one-letter code: Gamma-crystallin M1 (175 aa).

Beta/gamma crystallin 'Greek key' domains follow at residues 2–40 (GKII…RVES), 41–86 (GCFM…RYPY), 89–121 (FRMR…RMSD), and 130–172 (GHWL…RRIT).

This sequence belongs to the beta/gamma-crystallin family. As to quaternary structure, monomer.

Functionally, crystallins are the dominant structural components of the vertebrate eye lens. In Chiloscyllium indicum (Slender bamboo shark), this protein is Gamma-crystallin M1 (GM1).